Reading from the N-terminus, the 1370-residue chain is DNA-directed RNA polymerase subunit beta (1370 aa).

Belongs to the RNA polymerase beta chain family. The RNAP catalytic core consists of 2 alpha, 1 beta, 1 beta' and 1 omega subunit. When a sigma factor is associated with the core the holoenzyme is formed, which can initiate transcription.

It catalyses the reaction RNA(n) + a ribonucleoside 5'-triphosphate = RNA(n+1) + diphosphate. In terms of biological role, DNA-dependent RNA polymerase catalyzes the transcription of DNA into RNA using the four ribonucleoside triphosphates as substrates. In Geotalea daltonii (strain DSM 22248 / JCM 15807 / FRC-32) (Geobacter daltonii), this protein is DNA-directed RNA polymerase subunit beta.